The following is a 628-amino-acid chain: Chaperone protein HtpG (628 aa).

The a; substrate-binding stretch occupies residues Met1–Arg337. The b stretch occupies residues Glu338–Lys554. The c stretch occupies residues Met555–Arg628.

This sequence belongs to the heat shock protein 90 family. As to quaternary structure, homodimer.

It localises to the cytoplasm. In terms of biological role, molecular chaperone. Has ATPase activity. The protein is Chaperone protein HtpG of Francisella tularensis subsp. tularensis (strain WY96-3418).